The primary structure comprises 404 residues: Tryptophan synthase beta chain (404 aa).

Position 91 is an N6-(pyridoxal phosphate)lysine (lysine 91).

This sequence belongs to the TrpB family. As to quaternary structure, tetramer of two alpha and two beta chains. It depends on pyridoxal 5'-phosphate as a cofactor.

The enzyme catalyses (1S,2R)-1-C-(indol-3-yl)glycerol 3-phosphate + L-serine = D-glyceraldehyde 3-phosphate + L-tryptophan + H2O. It participates in amino-acid biosynthesis; L-tryptophan biosynthesis; L-tryptophan from chorismate: step 5/5. In terms of biological role, the beta subunit is responsible for the synthesis of L-tryptophan from indole and L-serine. The sequence is that of Tryptophan synthase beta chain from Clavibacter michiganensis subsp. michiganensis (strain NCPPB 382).